The chain runs to 248 residues: NADP-dependent 3-hydroxy acid dehydrogenase YdfG (248 aa).

Residues 7 to 12 (GATAGF), 32 to 33 (RR), 54 to 55 (DV), and N81 each bind NADP(+). S134 is a substrate binding site. NADP(+)-binding positions include Y147, K151, and 177-185 (PGLVGGTEF). Residue Y147 is the Proton acceptor of the active site.

This sequence belongs to the short-chain dehydrogenases/reductases (SDR) family. In terms of assembly, homotetramer.

It carries out the reaction 3-hydroxypropanoate + NADP(+) = 3-oxopropanoate + NADPH + H(+). It catalyses the reaction L-allo-threonine + NADP(+) = aminoacetone + CO2 + NADPH. Functionally, NADP-dependent dehydrogenase with broad substrate specificity acting on 3-hydroxy acids. Catalyzes the NADP-dependent oxidation of L-allo-threonine to L-2-amino-3-keto-butyrate, which is spontaneously decarboxylated into aminoacetone. Also acts on D-threonine, L-serine, D-serine, D-3-hydroxyisobutyrate, L-3-hydroxyisobutyrate, D-glycerate and L-glycerate. Able to catalyze the reduction of the malonic semialdehyde to 3-hydroxypropionic acid. YdfG is apparently supplementing RutE, the presumed malonic semialdehyde reductase involved in pyrimidine degradation since both are able to detoxify malonic semialdehyde. The sequence is that of NADP-dependent 3-hydroxy acid dehydrogenase YdfG from Escherichia coli O6:H1 (strain CFT073 / ATCC 700928 / UPEC).